Consider the following 376-residue polypeptide: NAD-capped RNA hydrolase (376 aa).

Cys-182, Cys-185, Cys-200, and Cys-211 together coordinate Zn(2+). Substrate contacts are provided by residues Tyr-222, 258 to 260 (AGF), Glu-274, Glu-278, and Glu-321. The region spanning 223-351 (PRTDPCVIMV…KDGPAPILFP (129 aa)) is the Nudix hydrolase domain. Mg(2+) is bound by residues Ala-258, Glu-274, Glu-278, and Glu-321. The Nudix box motif lies at 259 to 280 (GFLEPGESLEEAVVRETYEESG). Residues 374-376 (VKM) carry the Microbody targeting signal motif.

This sequence belongs to the Nudix hydrolase family. NudC subfamily. As to quaternary structure, homodimer. Mg(2+) is required as a cofactor. Requires Zn(2+) as cofactor.

The catalysed reaction is a 5'-end NAD(+)-phospho-ribonucleoside in mRNA + H2O = a 5'-end phospho-adenosine-phospho-ribonucleoside in mRNA + beta-nicotinamide D-ribonucleotide + 2 H(+). It catalyses the reaction NAD(+) + H2O = beta-nicotinamide D-ribonucleotide + AMP + 2 H(+). It carries out the reaction NADH + H2O = reduced beta-nicotinamide D-ribonucleotide + AMP + 2 H(+). Functionally, mRNA decapping enzyme that specifically removes the nicotinamide adenine dinucleotide (NAD) cap from a subset of mRNAs by hydrolyzing the diphosphate linkage to produce nicotinamide mononucleotide (NMN) and 5' monophosphate mRNA. The NAD-cap is present at the 5'-end of some RNAs; in contrast to the canonical N7 methylguanosine (m7G) cap, the NAD cap promotes mRNA decay. Mediates the hydrolysis of some nucleoside diphosphate derivatives. In Schizosaccharomyces pombe (strain 972 / ATCC 24843) (Fission yeast), this protein is NAD-capped RNA hydrolase.